We begin with the raw amino-acid sequence, 128 residues long: Small ribosomal subunit protein eS8 (128 aa).

Residues 1–37 form a disordered region; it reads MGYFQGNDFRKITGGKKGKHRDKRKFELGSPPTETKL. Over residues 13–23 the composition is skewed to basic residues; it reads TGGKKGKHRDK.

It belongs to the eukaryotic ribosomal protein eS8 family. As to quaternary structure, part of the 30S ribosomal subunit.

This is Small ribosomal subunit protein eS8 from Sulfurisphaera tokodaii (strain DSM 16993 / JCM 10545 / NBRC 100140 / 7) (Sulfolobus tokodaii).